The sequence spans 235 residues: Probable pyridoxal 5'-phosphate synthase subunit PDX1 (235 aa).

Lys16 serves as the catalytic Schiff-base intermediate with D-ribose 5-phosphate. Arg104 serves as a coordination point for D-glyceraldehyde 3-phosphate. D-ribose 5-phosphate contacts are provided by residues Gly153 and 174 to 175 (GS).

This sequence belongs to the PdxS/SNZ family.

The catalysed reaction is aldehydo-D-ribose 5-phosphate + D-glyceraldehyde 3-phosphate + L-glutamine = pyridoxal 5'-phosphate + L-glutamate + phosphate + 3 H2O + H(+). It participates in cofactor biosynthesis; pyridoxal 5'-phosphate biosynthesis. Its function is as follows. Catalyzes the formation of pyridoxal 5'-phosphate from ribose 5-phosphate (RBP), glyceraldehyde 3-phosphate (G3P) and ammonia. The ammonia is provided by PDX2. Can also use ribulose 5-phosphate and dihydroxyacetone phosphate as substrates, resulting from enzyme-catalyzed isomerization of RBP and G3P, respectively. Also plays an indirect role in resistance to singlet oxygen-generating photosensitizers. This is Probable pyridoxal 5'-phosphate synthase subunit PDX1 from Stellaria longipes (Longstalk starwort).